We begin with the raw amino-acid sequence, 243 residues long: Protein HUA2 (243 aa).

It localises to the cytoplasm. Functionally, may have a role in actin patch assembly. The protein is Protein HUA2 (HUA2) of Saccharomyces cerevisiae (strain ATCC 204508 / S288c) (Baker's yeast).